We begin with the raw amino-acid sequence, 438 residues long: MPTLEKTFELKQRGSTVRQEIIAGLTTFLAMVYSVIVVPNMLGAAGFPAESVFIATCLVAGLGSILIGLWANAPMAIGCAISLTAFTAFSLVIGQKVAIPVALGAVFLMGVVFTLISTTGIRAWILRNLPSNIAHGAGIGIGLFLLLIAANGVGLVVSNQAGLPVKLGDFTSFPVMMSLIGLALIIGLEKMKIKGGILWVIIAITIVGLIFDPNVKFGGEIFKMPTFGENSLFLQLDFMGALQPAILPVVFALVMTAVFDATGTIRAVAGQADLLDKDGQIINGGKALTSDSISSLFSGLFGTAPAAVYIESAAGTAAGGKTGITAIVVGVLFLLMLFFQPLAFLVPGYATAPALMYVGLLMLSNVSKLDFDDFVGAMSGLICAVFIVLTANIVTGIMLGFAALVIGRIVSGDIKRLNVGTVIIAIVLVAFYAGGWAI.

Helical transmembrane passes span 21 to 41 (IIAG…VPNM), 51 to 71 (SVFI…GLWA), 73 to 93 (APMA…SLVI), 97 to 117 (VAIP…TLIS), 137 to 157 (AGIG…GLVV), 167 to 187 (LGDF…LIIG), 195 to 215 (GGIL…DPNV), 238 to 258 (FMGA…MTAV), 296 to 316 (LFSG…AAGT), 326 to 346 (AIVV…AFLV), 347 to 367 (PGYA…SNVS), 386 to 406 (FIVL…ALVI), and 418 to 438 (NVGT…GWAI). 315–322 (GTAAGGKT) contributes to the ATP binding site.

This sequence belongs to the nucleobase:cation symporter-2 (NCS2) (TC 2.A.40) family. Azg-like subfamily.

Its subcellular location is the cell membrane. The chain is Putative permease HI_0125 from Haemophilus influenzae (strain ATCC 51907 / DSM 11121 / KW20 / Rd).